Here is a 105-residue protein sequence, read N- to C-terminus: Met repressor (105 aa).

Belongs to the MetJ family. As to quaternary structure, homodimer.

It is found in the cytoplasm. This regulatory protein, when combined with SAM (S-adenosylmethionine) represses the expression of the methionine regulon and of enzymes involved in SAM synthesis. The protein is Met repressor of Actinobacillus pleuropneumoniae serotype 7 (strain AP76).